Reading from the N-terminus, the 226-residue chain is Enolase-phosphatase E1 (226 aa).

It belongs to the HAD-like hydrolase superfamily. MasA/MtnC family. Monomer. It depends on Mg(2+) as a cofactor.

The catalysed reaction is 5-methylsulfanyl-2,3-dioxopentyl phosphate + H2O = 1,2-dihydroxy-5-(methylsulfanyl)pent-1-en-3-one + phosphate. It participates in amino-acid biosynthesis; L-methionine biosynthesis via salvage pathway; L-methionine from S-methyl-5-thio-alpha-D-ribose 1-phosphate: step 3/6. It functions in the pathway amino-acid biosynthesis; L-methionine biosynthesis via salvage pathway; L-methionine from S-methyl-5-thio-alpha-D-ribose 1-phosphate: step 4/6. Functionally, bifunctional enzyme that catalyzes the enolization of 2,3-diketo-5-methylthiopentyl-1-phosphate (DK-MTP-1-P) into the intermediate 2-hydroxy-3-keto-5-methylthiopentenyl-1-phosphate (HK-MTPenyl-1-P), which is then dephosphorylated to form the acireductone 1,2-dihydroxy-3-keto-5-methylthiopentene (DHK-MTPene). In Shewanella baltica (strain OS155 / ATCC BAA-1091), this protein is Enolase-phosphatase E1.